The chain runs to 462 residues: Chitinase-like mite allergen Der f 18.0101 (462 aa).

The first 25 residues, 1–25 (MTRFSLTVLAVLAACFGSNIRPNVA), serve as a signal peptide directing secretion. A GH18 domain is found at 29 to 378 (PKTVCYYESW…HAIQSNYYHG (350 aa)). Cys33 and Cys58 are joined by a disulfide. Asn338 carries N-linked (GlcNAc...) asparagine glycosylation. One can recognise a Chitin-binding type-2 domain in the interval 404 to 462 (VFHCHEEGFFRDKTYCATYYECKKGDFGLEKTVHHCANHLQAFDEVSRTCIDHTKIPGC). The cysteines at positions 439 and 453 are disulfide-linked.

The protein belongs to the glycosyl hydrolase 18 family. Chitinase class II subfamily. As to expression, expressed in the upper digestive tract. Staining is observed in the ventriculus, and in very rare individuals, also in the intestine or esophagus. No expression in fecal pellets neither inside the rectum nor defecated outside of the body.

The protein resides in the secreted. Probably a non-catalytic chitinase-like protein, which binds to insoluble chitin and enhances the activity of the catalytic chitinases. Has weak chitin-binding activity. The polypeptide is Chitinase-like mite allergen Der f 18.0101 (Dermatophagoides farinae (American house dust mite)).